Reading from the N-terminus, the 144-residue chain is AP-4 complex subunit sigma-1 (144 aa).

It belongs to the adaptor complexes small subunit family. As to quaternary structure, adaptor protein complex 4 (AP-4) is a heterotetramer composed of two large adaptins (epsilon-type subunit AP4E1 and beta-type subunit AP4B1), a medium adaptin (mu-type subunit AP4M1) and a small adaptin (sigma-type AP4S1).

It is found in the golgi apparatus. The protein resides in the trans-Golgi network membrane. Its function is as follows. Component of the adaptor protein complex 4 (AP-4). Adaptor protein complexes are vesicle coat components involved both in vesicle formation and cargo selection. They control the vesicular transport of proteins in different trafficking pathways. AP-4 forms a non clathrin-associated coat on vesicles departing the trans-Golgi network (TGN) and may be involved in the targeting of proteins from the trans-Golgi network (TGN) to the endosomal-lysosomal system. It is also involved in protein sorting to the basolateral membrane in epithelial cells and the proper asymmetric localization of somatodendritic proteins in neurons. AP-4 is involved in the recognition and binding of tyrosine-based sorting signals found in the cytoplasmic part of cargos, but may also recognize other types of sorting signal. This chain is AP-4 complex subunit sigma-1, found in Mus musculus (Mouse).